The sequence spans 85 residues: uncharacterized protein (85 aa).

The tract at residues 44-85 is disordered; the sequence is EAHPSEHNGTVPRSLSQEWAKILAEEAEENSEENNDESEEDN. Residues 50–60 are compositionally biased toward polar residues; the sequence is HNGTVPRSLSQ. Acidic residues predominate over residues 68–85; that stretch reads EEAEENSEENNDESEEDN.

This is an uncharacterized protein from Haloarcula hispanica (His1V).